Reading from the N-terminus, the 175-residue chain is CEN-like protein 4 (175 aa).

This sequence belongs to the phosphatidylethanolamine-binding protein family. In terms of tissue distribution, expressed in vegetative axillary meristems but not in the main shoot meristem.

It is found in the cytoplasm. Functionally, may form complexes with phosphorylated ligands by interfering with kinases and their effectors. In Nicotiana tabacum (Common tobacco), this protein is CEN-like protein 4 (CET4).